We begin with the raw amino-acid sequence, 389 residues long: UDP-D-apiose/UDP-D-xylose synthase 2 (389 aa).

Residues Phe28, Ile29, Asp49, Asn76, Ile77, and Leu96 each contribute to the NAD(+) site. Positions 105, 139, 141, 182, and 185 each coordinate UDP-alpha-D-glucuronate. Residues Tyr185 and Lys189 each coordinate NAD(+). Tyr185 acts as the Proton acceptor in catalysis. Asn214 is a binding site for UDP-alpha-D-glucuronate. Positions 215 and 235 each coordinate NAD(+). 7 residues coordinate UDP-alpha-D-glucuronate: Lys251, Val253, Arg260, Tyr331, Tyr335, Asp337, and Arg341.

The protein belongs to the NAD(P)-dependent epimerase/dehydratase family. As to quaternary structure, homodimer and heterodimer with AXS1. It depends on NAD(+) as a cofactor. In terms of tissue distribution, widely expressed with stronger expression in dark-grown seedlings, leaves and stems, and lower levels in flowers, siliques, pistils, pollen and roots.

The protein resides in the cytoplasm. The catalysed reaction is UDP-alpha-D-glucuronate + H(+) = UDP-alpha-D-xylose + CO2. The enzyme catalyses UDP-alpha-D-glucuronate + H(+) = UDP-alpha-D-apiose + CO2. Its function is as follows. Together with AXS1, catalyzes the conversion of UDP-D-glucuronate into a mixture of UDP-D-apiose (UDP-Api) as the main product and UDP-D-xylose to a lesser extent, via a cycle of oxidation and reduction. D-Apiose (3-C-hydroxymethyl-d-erythrose) is the only plant cell wall monosaccharide with a branched carbon skeleton and is found in rhamnogalacturonan II (RG-II), apiogalacturonan, and several apioglycosides. The sequence is that of UDP-D-apiose/UDP-D-xylose synthase 2 from Arabidopsis thaliana (Mouse-ear cress).